Here is a 376-residue protein sequence, read N- to C-terminus: Peroxisomal membrane protein PEX14 (376 aa).

The segment covering 1–12 (MASSEQAEQPNQ) has biased composition (polar residues). Positions 1 to 24 (MASSEQAEQPNQPSSPPGSENVVP) are disordered. Ala-2 carries the N-acetylalanine modification. Topologically, residues 2 to 108 (ASSEQAEQPN…YSPRGSRWRD (107 aa)) are peroxisomal. N6-acetyllysine is present on Lys-34. Residues 70–102 (SGTAADEPSPLGPATPVVPVQPPHLTPQPYSPR) are disordered. Residues 88 to 99 (PVQPPHLTPQPY) are compositionally biased toward pro residues. A helical transmembrane segment spans residues 109–127 (YGALAIIMAGIAFGFHQLY). The Cytoplasmic portion of the chain corresponds to 128-376 (KRYLLPLILG…EGASNETERD (249 aa)). The segment at 230 to 376 (PPSPSAPKIP…EGASNETERD (147 aa)) is disordered. Ser-232 carries the post-translational modification Phosphoserine. 2 stretches are compositionally biased toward low complexity: residues 247 to 259 (SSSPSSPAAVNHH) and 265 to 275 (SPVSNESTSSS). Phosphoserine is present on residues Ser-282 and Ser-334. Acidic residues predominate over residues 323 to 341 (KEDEDDEDDDVSHVDEEDV). Residues 359–376 (QVEKLRRPEGASNETERD) are compositionally biased toward basic and acidic residues.

Belongs to the peroxin-14 family. Interacts with PEX13; forming the PEX13-PEX14 docking complex. Interacts with PEX5 (via WxxxF/Y motifs). Interacts with PEX19. Interacts with tubulin.

It is found in the peroxisome membrane. Functionally, component of the PEX13-PEX14 docking complex, a translocon channel that specifically mediates the import of peroxisomal cargo proteins bound to PEX5 receptor. The PEX13-PEX14 docking complex forms a large import pore which can be opened to a diameter of about 9 nm. Mechanistically, PEX5 receptor along with cargo proteins associates with the PEX14 subunit of the PEX13-PEX14 docking complex in the cytosol, leading to the insertion of the receptor into the organelle membrane with the concomitant translocation of the cargo into the peroxisome matrix. Plays a key role for peroxisome movement through a direct interaction with tubulin. This chain is Peroxisomal membrane protein PEX14, found in Mus musculus (Mouse).